Here is a 722-residue protein sequence, read N- to C-terminus: Fatty acid oxidation complex subunit alpha (722 aa).

The interval 1–189 (MIYQGKSLSA…AQGAIDAVVE (189 aa)) is enoyl-CoA hydratase/isomerase. Asp-296 contributes to the substrate binding site. The tract at residues 311–722 (TKAVNKAAVL…SYFTTDVKLA (412 aa)) is 3-hydroxyacyl-CoA dehydrogenase. NAD(+)-binding positions include Met-325, Asp-344, 401–403 (VVE), Lys-408, and Ser-430. His-451 functions as the For 3-hydroxyacyl-CoA dehydrogenase activity in the catalytic mechanism. Asn-454 serves as a coordination point for NAD(+). The substrate site is built by Asn-501 and Tyr-661.

This sequence in the N-terminal section; belongs to the enoyl-CoA hydratase/isomerase family. The protein in the C-terminal section; belongs to the 3-hydroxyacyl-CoA dehydrogenase family. In terms of assembly, heterotetramer of two alpha chains (FadB) and two beta chains (FadA).

The enzyme catalyses a (3S)-3-hydroxyacyl-CoA + NAD(+) = a 3-oxoacyl-CoA + NADH + H(+). It catalyses the reaction a (3S)-3-hydroxyacyl-CoA = a (2E)-enoyl-CoA + H2O. It carries out the reaction a 4-saturated-(3S)-3-hydroxyacyl-CoA = a (3E)-enoyl-CoA + H2O. The catalysed reaction is (3S)-3-hydroxybutanoyl-CoA = (3R)-3-hydroxybutanoyl-CoA. The enzyme catalyses a (3Z)-enoyl-CoA = a 4-saturated (2E)-enoyl-CoA. It catalyses the reaction a (3E)-enoyl-CoA = a 4-saturated (2E)-enoyl-CoA. Its pathway is lipid metabolism; fatty acid beta-oxidation. In terms of biological role, involved in the aerobic and anaerobic degradation of long-chain fatty acids via beta-oxidation cycle. Catalyzes the formation of 3-oxoacyl-CoA from enoyl-CoA via L-3-hydroxyacyl-CoA. It can also use D-3-hydroxyacyl-CoA and cis-3-enoyl-CoA as substrate. In Colwellia psychrerythraea (strain 34H / ATCC BAA-681) (Vibrio psychroerythus), this protein is Fatty acid oxidation complex subunit alpha.